Reading from the N-terminus, the 528-residue chain is GMP synthase [glutamine-hydrolyzing] (528 aa).

A Glutamine amidotransferase type-1 domain is found at 3–199 (KVAIIDFGSQ…FLDIAGCQKD (197 aa)). Residue C83 is the Nucleophile of the active site. Active-site residues include H174 and E176. The region spanning 200–394 (WTVTSFIDDQ…LGISTEILMR (195 aa)) is the GMPS ATP-PPase domain. 227 to 233 (SGGVDSS) is an ATP binding site.

As to quaternary structure, homodimer.

It catalyses the reaction XMP + L-glutamine + ATP + H2O = GMP + L-glutamate + AMP + diphosphate + 2 H(+). It functions in the pathway purine metabolism; GMP biosynthesis; GMP from XMP (L-Gln route): step 1/1. Catalyzes the synthesis of GMP from XMP. The sequence is that of GMP synthase [glutamine-hydrolyzing] from Ehrlichia ruminantium (strain Welgevonden).